The following is a 440-amino-acid chain: Alpha-methylserine aldolase (440 aa).

N6-(pyridoxal phosphate)lysine is present on lysine 255.

It belongs to the SHMT family. Alpha-methylserine aldolase subfamily. In terms of assembly, homodimer. It depends on pyridoxal 5'-phosphate as a cofactor.

It catalyses the reaction 2-methyl-L-serine = formaldehyde + L-alanine. It carries out the reaction 2-ethyl-L-serine = (2S)-2-aminobutanoate + formaldehyde. Its activity is regulated as follows. In the alpha-methyl-L-serine synthesis reaction, activity is inhibited by an excess amount of formaldehyde (at a concentration greater than 4 mM). Formaldehyde release activity is reduced by the sulfhydryl reagent N-ethylmaleimide, iodoacetate amide and iodoacetic acid, but not by dithiothreitol and 2-mercaptoethanol. Activity is enhanced by 1 mM of manganese chloride. In terms of biological role, catalyzes the reversible interconversion of alpha-methyl-L-serine to L-alanine and formaldehyde. Can also catalyze the synthesis of alpha-ethyl-L-serine from L-2-aminobutyric acid and formaldehyde. Also shows low alanine racemase activity. Cannot use alpha-methyl-D-serine, L-serine, D-serine, (S)-2-amino-1-propanol, (R)-2-amino-1-propanol, (S)-alpha-hydroxymethyltyrosine, (R)-alpha-hydroxymethyltyrosine, alpha-iso-butyl-DL-serine, alpha-iso-propyl-DL-serine or alpha-benzyl-DL-serine. Cannot use D-alanine instead of L-alanine as the substrate for alpha-methyl-L-serine synthesis. Does not require tetrahydrofolate (THF) for activity. In Variovorax paradoxus, this protein is Alpha-methylserine aldolase.